The chain runs to 461 residues: Methylthioribose transporter (461 aa).

12 helical membrane passes run 33–53 (LLGI…TVAA), 56–76 (AGPA…LAAF), 102–122 (LLAF…LSAV), 152–172 (MAGA…TAIV), 185–205 (VIVL…IGYV), 213–233 (FMPF…FAYL), 254–274 (VGII…SLVL), 301–321 (VAGI…LALL), 355–375 (TWLT…GTLA), 376–396 (HLVN…VIVL), 409–429 (VPFV…FMYS), and 432–452 (GVTW…YFLY).

It belongs to the amino acid-polyamine-organocation (APC) superfamily.

It is found in the cell membrane. Functionally, involved in import of methylthioribose (MTR) into the cell. In Bacillus subtilis (strain 168), this protein is Methylthioribose transporter.